The primary structure comprises 125 residues: Large ribosomal subunit protein bL12 (125 aa).

It belongs to the bacterial ribosomal protein bL12 family. In terms of assembly, homodimer. Part of the ribosomal stalk of the 50S ribosomal subunit. Forms a multimeric L10(L12)X complex, where L10 forms an elongated spine to which 2 to 4 L12 dimers bind in a sequential fashion. Binds GTP-bound translation factors.

In terms of biological role, forms part of the ribosomal stalk which helps the ribosome interact with GTP-bound translation factors. Is thus essential for accurate translation. In Variovorax paradoxus (strain S110), this protein is Large ribosomal subunit protein bL12.